Reading from the N-terminus, the 158-residue chain is 2-C-methyl-D-erythritol 2,4-cyclodiphosphate synthase (158 aa).

2 residues coordinate a divalent metal cation: Asp-9 and His-11. 4-CDP-2-C-methyl-D-erythritol 2-phosphate is bound by residues 9-11 (DVH) and 35-36 (HS). His-43 provides a ligand contact to a divalent metal cation. 4-CDP-2-C-methyl-D-erythritol 2-phosphate is bound by residues 57–59 (DIG) and Arg-143.

It belongs to the IspF family. Homotrimer. It depends on a divalent metal cation as a cofactor.

The enzyme catalyses 4-CDP-2-C-methyl-D-erythritol 2-phosphate = 2-C-methyl-D-erythritol 2,4-cyclic diphosphate + CMP. It participates in isoprenoid biosynthesis; isopentenyl diphosphate biosynthesis via DXP pathway; isopentenyl diphosphate from 1-deoxy-D-xylulose 5-phosphate: step 4/6. Its function is as follows. Involved in the biosynthesis of isopentenyl diphosphate (IPP) and dimethylallyl diphosphate (DMAPP), two major building blocks of isoprenoid compounds. Catalyzes the conversion of 4-diphosphocytidyl-2-C-methyl-D-erythritol 2-phosphate (CDP-ME2P) to 2-C-methyl-D-erythritol 2,4-cyclodiphosphate (ME-CPP) with a corresponding release of cytidine 5-monophosphate (CMP). This chain is 2-C-methyl-D-erythritol 2,4-cyclodiphosphate synthase, found in Chromobacterium violaceum (strain ATCC 12472 / DSM 30191 / JCM 1249 / CCUG 213 / NBRC 12614 / NCIMB 9131 / NCTC 9757 / MK).